The chain runs to 493 residues: Rop guanine nucleotide exchange factor 10 (493 aa).

Disordered regions lie at residues 1–45 and 400–423; these read MFDG…RSDM and GEAE…VVAA. The segment covering 17-27 has biased composition (basic and acidic residues); the sequence is DGMHTPEHELA. The PRONE domain maps to 35–401; sequence RRGKQNRRSD…RLVQRQLMGE (367 aa).

Its function is as follows. Guanine-nucleotide exchange factor (GEF) that acts as an activator of Rop (Rho of plants) GTPases by promoting the exchange of GDP for GTP. The protein is Rop guanine nucleotide exchange factor 10 (ROPGEF10) of Arabidopsis thaliana (Mouse-ear cress).